Consider the following 718-residue polypeptide: Catalase-peroxidase (718 aa).

A cross-link (tryptophyl-tyrosyl-methioninium (Trp-Tyr) (with M-246)) is located at residues 92 to 220; that stretch reads WHAAGTYRTA…LASVMMGLIY (129 aa). His-93 functions as the Proton acceptor in the catalytic mechanism. The tryptophyl-tyrosyl-methioninium (Tyr-Met) (with W-92) cross-link spans 220 to 246; sequence YVNPEGVDGHPDPLKTANDVRVTFERM. His-261 is a binding site for heme b.

Belongs to the peroxidase family. Peroxidase/catalase subfamily. In terms of assembly, homodimer or homotetramer. Heme b is required as a cofactor. In terms of processing, formation of the three residue Trp-Tyr-Met cross-link is important for the catalase, but not the peroxidase activity of the enzyme.

It carries out the reaction H2O2 + AH2 = A + 2 H2O. The catalysed reaction is 2 H2O2 = O2 + 2 H2O. Bifunctional enzyme with both catalase and broad-spectrum peroxidase activity. The chain is Catalase-peroxidase from Shewanella halifaxensis (strain HAW-EB4).